The chain runs to 951 residues: Protocadherin-20 (951 aa).

An N-terminal signal peptide occupies residues 1–60 (MRGRGNARSSQALGVSWCPATWHPRLDMGRLHRPRSSTSYRNLPHLFLFFLFVGPFSCLG). Residues 61 to 890 (SYSRATELLY…VESVSCMPTL (830 aa)) are Extracellular-facing. 6 consecutive Cadherin domains span residues 64-209 (RATE…APQF), 210-320 (PVSQ…CPLF), 321-535 (TDSQ…APIF), 536-639 (LQPL…SPRF), 640-742 (INKD…PPLV), and 746-863 (QSNM…EPEI). Residue Asn135 is glycosylated (N-linked (GlcNAc...) asparagine). Residues Asn326 and Asn332 are each glycosylated (N-linked (GlcNAc...) asparagine). N-linked (GlcNAc...) asparagine glycans are attached at residues Asn680, Asn748, Asn803, Asn844, and Asn849. The chain crosses the membrane as a helical span at residues 891–911 (VALSVISLGSITLVTGMGIYI). Over 912 to 951 (CLRKGEKHPREDENLEVQIPLKGKIDLHMRERKPMDISNI) the chain is Cytoplasmic.

The protein resides in the cell membrane. In terms of biological role, potential calcium-dependent cell-adhesion protein. In Homo sapiens (Human), this protein is Protocadherin-20 (PCDH20).